A 349-amino-acid polypeptide reads, in one-letter code: tRNA pseudouridine synthase D (349 aa).

D77 (nucleophile) is an active-site residue. The TRUD domain occupies 151–309 (GVPNYFGEQR…ETIDESTLKL (159 aa)).

The protein belongs to the pseudouridine synthase TruD family.

The catalysed reaction is uridine(13) in tRNA = pseudouridine(13) in tRNA. In terms of biological role, responsible for synthesis of pseudouridine from uracil-13 in transfer RNAs. This chain is tRNA pseudouridine synthase D, found in Pseudoalteromonas translucida (strain TAC 125).